A 611-amino-acid chain; its full sequence is Chaperone protein DnaK (611 aa).

At Thr173 the chain carries Phosphothreonine; by autocatalysis. Residues 579–592 (AAGQAEGAQGAQDA) show a composition bias toward low complexity. Positions 579–598 (AAGQAEGAQGAQDAGAKKDN) are disordered.

The protein belongs to the heat shock protein 70 family.

Functionally, acts as a chaperone. In Bacillus cereus (strain ATCC 10987 / NRS 248), this protein is Chaperone protein DnaK.